Here is a 160-residue protein sequence, read N- to C-terminus: Cytochrome b6-f complex subunit 4 (160 aa).

Transmembrane regions (helical) follow at residues 36–56 (LLYI…GLAV), 95–115 (LLGV…PFLE), and 131–151 (TIFL…ALPI).

It belongs to the cytochrome b family. PetD subfamily. As to quaternary structure, the 4 large subunits of the cytochrome b6-f complex are cytochrome b6, subunit IV (17 kDa polypeptide, petD), cytochrome f and the Rieske protein, while the 4 small subunits are petG, petL, petM and petN. The complex functions as a dimer.

Its subcellular location is the plastid. It is found in the chloroplast thylakoid membrane. Component of the cytochrome b6-f complex, which mediates electron transfer between photosystem II (PSII) and photosystem I (PSI), cyclic electron flow around PSI, and state transitions. This chain is Cytochrome b6-f complex subunit 4, found in Anthoceros angustus (Hornwort).